The primary structure comprises 301 residues: uncharacterized protein (301 aa).

This sequence belongs to the asfivirus E301R family. In terms of assembly, interacts with host IRF3.

Its function is as follows. Plays a role in the inhibition of host innate immune system by acting as a negatively regulator of type I interferon production. Mechanistically, interacts with and prevents host IRF3 nuclear localization to inhibit its transcriptional activity. This is an uncharacterized protein from African swine fever virus (isolate Pig/Kenya/KEN-50/1950) (ASFV).